A 283-amino-acid polypeptide reads, in one-letter code: Pantothenate synthetase (283 aa).

30-37 (MGYFHDGH) provides a ligand contact to ATP. The active-site Proton donor is the H37. Q61 is a (R)-pantoate binding site. Q61 contacts beta-alanine. 147–150 (GSKD) contributes to the ATP binding site. Position 153 (Q153) interacts with (R)-pantoate. ATP contacts are provided by residues V176 and 184–187 (MSSR).

Belongs to the pantothenate synthetase family. As to quaternary structure, homodimer.

It is found in the cytoplasm. It carries out the reaction (R)-pantoate + beta-alanine + ATP = (R)-pantothenate + AMP + diphosphate + H(+). It functions in the pathway cofactor biosynthesis; (R)-pantothenate biosynthesis; (R)-pantothenate from (R)-pantoate and beta-alanine: step 1/1. Catalyzes the condensation of pantoate with beta-alanine in an ATP-dependent reaction via a pantoyl-adenylate intermediate. In Desulforapulum autotrophicum (strain ATCC 43914 / DSM 3382 / VKM B-1955 / HRM2) (Desulfobacterium autotrophicum), this protein is Pantothenate synthetase.